A 1923-amino-acid polypeptide reads, in one-letter code: Callose synthase 5 (1923 aa).

Residues 1–10 show a composition bias toward polar residues; that stretch reads MAQSSTSHDS. Residues 1 to 22 form a disordered region; sequence MAQSSTSHDSGPQGLMRRPSRS. Residues 1 to 481 lie on the Cytoplasmic side of the membrane; sequence MAQSSTSHDS…ETRTFWHIYH (481 aa). The helical transmembrane segment at 482 to 502 threads the bilayer; it reads SFDRLWTFYLLALQAMIILAF. The Extracellular segment spans residues 503–521; that stretch reads ERVELREILRKDVLYALSS. Residues 522 to 542 traverse the membrane as a helical segment; it reads IFITAAFLRFLQSVLDVILNF. The Cytoplasmic segment spans residues 543–559; the sequence is PGFHRWKFTDVLRNILK. Residues 560 to 580 traverse the membrane as a helical segment; it reads IVVSLAWCVVLPLCYAQSVSF. Topologically, residues 581–601 are extracellular; that stretch reads APGKLKQWLSFLPQVKGVPPL. Residues 602 to 622 traverse the membrane as a helical segment; it reads YIMAVALYLLPNVLAAIMFIF. The Cytoplasmic segment spans residues 623 to 658; sequence PMLRRWIENSDWHIFRLLLWWSQPRIYVGRGMHESQ. The chain crosses the membrane as a helical span at residues 659-679; sequence IALIKYTIFWLLLFCCKFAFS. Topologically, residues 680–719 are extracellular; the sequence is YFLQVKLLVKPTNAIMSIRHVKYKWHEFFPNAEHNYGAVV. A helical transmembrane segment spans residues 720 to 740; sequence SLWLPVILVYFMDTQIWYAIF. Topologically, residues 741–1486 are cytoplasmic; it reads STICGGVIGA…FDFFRMMSCY (746 aa). Residues 1487 to 1507 traverse the membrane as a helical segment; sequence FTTVGFYISSMIVVLTVYAFL. The Extracellular portion of the chain corresponds to 1508 to 1535; the sequence is YGRLYLSLSGVEEAIVKFAAAKGDSSLK. The chain crosses the membrane as a helical span at residues 1536-1556; the sequence is AAMASQSVVQLGLLMTLPMVM. Residues 1557-1566 are Cytoplasmic-facing; that stretch reads EIGLERGFRT. Residues 1567-1587 traverse the membrane as a helical segment; that stretch reads ALSDLIIMQLQLAPVFFTFSL. The Extracellular segment spans residues 1588-1630; that stretch reads GTKVHYYGRTILHGGSKYRATGRGFVVKHEKFAENYRMYSRSH. The helical transmembrane segment at 1631–1651 threads the bilayer; it reads FVKGMELMVLLICYRIYGKAA. Over 1652 to 1657 the chain is Cytoplasmic; sequence EDSVGY. The helical transmembrane segment at 1658 to 1678 threads the bilayer; sequence ALVMGSTWFLVGSWLFAPFFF. At 1679 to 1732 the chain is on the extracellular side; it reads NPSGFEWQKIVDDWDDWNKWISSRGGIGVPANKSWESWWEEEQEHLLHSGFFGK. N-linked (GlcNAc...) asparagine glycosylation is present at Asn-1710. Residues 1733 to 1755 form a helical membrane-spanning segment; sequence FWEIFLSLRYFIYQYGIVYQLNL. The Cytoplasmic segment spans residues 1756–1766; it reads TKESRMGKQHS. A helical transmembrane segment spans residues 1767-1787; it reads IIVYGLSWLVIVAVMIVLKIV. Residues 1788–1803 lie on the Extracellular side of the membrane; sequence SMGRKKFSADFQLMFR. A helical membrane pass occupies residues 1804–1824; it reads LLKLFLFIGSVVIVGMLFHFL. Residue Lys-1825 is a topological domain, cytoplasmic. Residues 1826–1846 form a helical membrane-spanning segment; that stretch reads LTVGDIMQSLLAFLPTGWALL. Topologically, residues 1847–1873 are extracellular; sequence QISQVARPLMKTVGMWGSVKALARGYE. The chain crosses the membrane as a helical span at residues 1874-1894; the sequence is YIMGVVIFMPVTVLAWFPFVS. At 1895 to 1923 the chain is on the cytoplasmic side; it reads EFQTRLLFNQAFSRGLQIQRILAGGKKQK.

Belongs to the glycosyltransferase 48 family.

It is found in the cell membrane. It catalyses the reaction [(1-&gt;3)-beta-D-glucosyl](n) + UDP-alpha-D-glucose = [(1-&gt;3)-beta-D-glucosyl](n+1) + UDP + H(+). Required for the formation of the callose wall separating the tetraspores (interstitial wall) and surrounding the pollen mother cells (peripheral wall). Required for exine formation on pollen wall. May be involved in callose synthesis during pollen tube growth. During plant growth and development, callose is found as a transitory component of the cell plate in dividing cells, is a major component of pollen mother cell walls and pollen tubes, and is found as a structural component of plasmodesmatal canals. This chain is Callose synthase 5 (CALS5), found in Arabidopsis thaliana (Mouse-ear cress).